The following is a 160-amino-acid chain: Cytochrome b6-f complex subunit 4 (160 aa).

At 1 to 35 (MATLKKPDLSDPKLRAKLAKGMGHNYYGEPAWPND) the chain is on the cytoplasmic side. A helical membrane pass occupies residues 36-56 (LLYVFPVVIMGTFACIVALSV). The Lumenal, thylakoid segment spans residues 57-94 (LDPAMVGEPADPFATPLEILPEWYLYPVFQILRSVPNK). A helical membrane pass occupies residues 95–115 (LLGVLLMASVPLGLILVPFIE). Residues 116 to 130 (NVNKFQNPFRRPVAT) are Cytoplasmic-facing. The chain crosses the membrane as a helical span at residues 131–151 (TIFLFGTLVTIWLGIGATFPL). The Lumenal, thylakoid portion of the chain corresponds to 152–160 (DKTLTLGLF).

It belongs to the cytochrome b family. PetD subfamily. As to quaternary structure, the 4 large subunits of the cytochrome b6-f complex are cytochrome b6, subunit IV (17 kDa polypeptide, PetD), cytochrome f and the Rieske protein, while the 4 small subunits are PetG, PetL, PetM and PetN. The complex functions as a dimer.

The protein resides in the cellular thylakoid membrane. Component of the cytochrome b6-f complex, which mediates electron transfer between photosystem II (PSII) and photosystem I (PSI), cyclic electron flow around PSI, and state transitions. The protein is Cytochrome b6-f complex subunit 4 of Mastigocladus laminosus (Fischerella sp.).